Consider the following 625-residue polypeptide: DNA mismatch repair protein MutL (625 aa).

Belongs to the DNA mismatch repair MutL/HexB family.

This protein is involved in the repair of mismatches in DNA. It is required for dam-dependent methyl-directed DNA mismatch repair. May act as a 'molecular matchmaker', a protein that promotes the formation of a stable complex between two or more DNA-binding proteins in an ATP-dependent manner without itself being part of a final effector complex. The protein is DNA mismatch repair protein MutL of Azorhizobium caulinodans (strain ATCC 43989 / DSM 5975 / JCM 20966 / LMG 6465 / NBRC 14845 / NCIMB 13405 / ORS 571).